The chain runs to 59 residues: Large ribosomal subunit protein uL30 (59 aa).

Belongs to the universal ribosomal protein uL30 family. In terms of assembly, part of the 50S ribosomal subunit.

This is Large ribosomal subunit protein uL30 from Clostridium botulinum (strain Alaska E43 / Type E3).